The sequence spans 132 residues: UPF0102 protein Ajs_0414 (132 aa).

Residues 1 to 23 are disordered; that stretch reads MGFLGKKVNGSAPARTTRAAGQA.

This sequence belongs to the UPF0102 family.

This is UPF0102 protein Ajs_0414 from Acidovorax sp. (strain JS42).